The chain runs to 130 residues: Small ribosomal subunit protein uS11c (130 aa).

Belongs to the universal ribosomal protein uS11 family. Part of the 30S ribosomal subunit.

It localises to the plastid. It is found in the chloroplast. The polypeptide is Small ribosomal subunit protein uS11c (Tupiella akineta (Green alga)).